We begin with the raw amino-acid sequence, 154 residues long: Large ribosomal subunit protein uL13 (154 aa).

Positions 131–154 (DHKHEAQQPEVVDFKSMNSKNTRG) are disordered.

The protein belongs to the universal ribosomal protein uL13 family. In terms of assembly, part of the 50S ribosomal subunit.

Functionally, this protein is one of the early assembly proteins of the 50S ribosomal subunit, although it is not seen to bind rRNA by itself. It is important during the early stages of 50S assembly. The sequence is that of Large ribosomal subunit protein uL13 from Maricaulis maris (strain MCS10) (Caulobacter maris).